The sequence spans 296 residues: Sulfate adenylyltransferase subunit 2 (296 aa).

The protein belongs to the PAPS reductase family. CysD subfamily. Heterodimer composed of CysD, the smaller subunit, and CysN.

It carries out the reaction sulfate + ATP + H(+) = adenosine 5'-phosphosulfate + diphosphate. Its pathway is sulfur metabolism; hydrogen sulfide biosynthesis; sulfite from sulfate: step 1/3. Its function is as follows. With CysN forms the ATP sulfurylase (ATPS) that catalyzes the adenylation of sulfate producing adenosine 5'-phosphosulfate (APS) and diphosphate, the first enzymatic step in sulfur assimilation pathway. APS synthesis involves the formation of a high-energy phosphoric-sulfuric acid anhydride bond driven by GTP hydrolysis by CysN coupled to ATP hydrolysis by CysD. This chain is Sulfate adenylyltransferase subunit 2, found in Rhodospirillum rubrum (strain ATCC 11170 / ATH 1.1.1 / DSM 467 / LMG 4362 / NCIMB 8255 / S1).